The chain runs to 445 residues: Methionine aminopeptidase 2-1 (445 aa).

The segment at 1–86 (MAAQASEDLQ…VQSEPPRVPL (86 aa)) is disordered. Over residues 34–46 (GEAEDDSDDDADE) the composition is skewed to acidic residues. The span at 59–74 (AKKKKKRKSKKKKKGG) shows a compositional bias: basic residues. Position 198 (His-198) interacts with substrate. Residues Asp-218, Asp-229, and His-298 each contribute to the a divalent metal cation site. Substrate is bound at residue His-306. Residues Glu-331 and Glu-426 each coordinate a divalent metal cation.

The protein belongs to the peptidase M24A family. Methionine aminopeptidase eukaryotic type 2 subfamily. It depends on Co(2+) as a cofactor. Zn(2+) serves as cofactor. Requires Mn(2+) as cofactor. The cofactor is Fe(2+).

Its subcellular location is the cytoplasm. It carries out the reaction Release of N-terminal amino acids, preferentially methionine, from peptides and arylamides.. Its function is as follows. Cotranslationally removes the N-terminal methionine from nascent proteins. The N-terminal methionine is often cleaved when the second residue in the primary sequence is small and uncharged (Met-Ala-, Cys, Gly, Pro, Ser, Thr, or Val). The protein is Methionine aminopeptidase 2-1 of Aspergillus flavus (strain ATCC 200026 / FGSC A1120 / IAM 13836 / NRRL 3357 / JCM 12722 / SRRC 167).